The sequence spans 225 residues: GTP:AMP phosphotransferase, mitochondrial (225 aa).

24-29 provides a ligand contact to GTP; that stretch reads GSGKGT. Residues 45–74 are NMP; it reads SSGDILRQEIKSESTLGREATTYIAQGKLL. AMP-binding positions include Ser46, Arg51, 72–74, 103–106, and Gln110; these read KLL and GFPR. Positions 144–181 are LID; sequence NRYVHVPSGRVYNLQYNPPKVPGLDDITGEPLTKRLDD. Residues Arg145 and 154-155 contribute to the GTP site; that span reads VY. The AMP site is built by Arg178 and Arg189. Ser218 lines the GTP pocket.

This sequence belongs to the adenylate kinase family. AK3 subfamily. In terms of assembly, monomer.

It localises to the mitochondrion matrix. The enzyme catalyses a ribonucleoside 5'-triphosphate + AMP = a ribonucleoside 5'-diphosphate + ADP. Functionally, involved in maintaining the homeostasis of cellular nucleotides by catalyzing the interconversion of nucleoside phosphates. Has GTP:AMP phosphotransferase and ITP:AMP phosphotransferase activities. Does not accept ATP as phosphate donor. This Saccharomyces cerevisiae (strain ATCC 204508 / S288c) (Baker's yeast) protein is GTP:AMP phosphotransferase, mitochondrial.